The sequence spans 291 residues: MRVVRTIAEMQAICRTLHREGKSIGLVPTMGALHAGHISLVRTARTQNDSVVVSIFVNPIQFGPNEDLAKYPRTFEQDCAQLDHEGVDFVFSPGVEEMYPEGTATFVHVDGLSEKLDGRSRPGHFKGVTTVVSKLFHIIPADHAYFGQKDAAQVAVIRKMVRDQNFDIDLMICPIVREKDGLALSSRNAYLDPTQRQQALVLHRALMRVQMLADTGHTDAYYLAEAGRAVIAEEPGAKLDYLEIVDPNTLEPITEIGKGALVAVAAQIGNTRLIDNLVLQAAGNARGPRTS.

Position 30–37 (30–37 (MGALHAGH)) interacts with ATP. The active-site Proton donor is the His-37. Gln-61 contributes to the (R)-pantoate binding site. Position 61 (Gln-61) interacts with beta-alanine. 147–150 (GQKD) provides a ligand contact to ATP. Gln-153 lines the (R)-pantoate pocket. Residues Val-176 and 184-187 (LSSR) each bind ATP.

This sequence belongs to the pantothenate synthetase family. In terms of assembly, homodimer.

Its subcellular location is the cytoplasm. It carries out the reaction (R)-pantoate + beta-alanine + ATP = (R)-pantothenate + AMP + diphosphate + H(+). It functions in the pathway cofactor biosynthesis; (R)-pantothenate biosynthesis; (R)-pantothenate from (R)-pantoate and beta-alanine: step 1/1. Catalyzes the condensation of pantoate with beta-alanine in an ATP-dependent reaction via a pantoyl-adenylate intermediate. This Koribacter versatilis (strain Ellin345) protein is Pantothenate synthetase.